Consider the following 604-residue polypeptide: Elongation factor 4 (604 aa).

Residues 7 to 190 (SRLRNFCIIA…IVDRVPAPPD (184 aa)) form the tr-type G domain. GTP-binding positions include 19-24 (DHGKST) and 136-139 (NKID).

It belongs to the TRAFAC class translation factor GTPase superfamily. Classic translation factor GTPase family. LepA subfamily.

It localises to the cell inner membrane. The enzyme catalyses GTP + H2O = GDP + phosphate + H(+). Functionally, required for accurate and efficient protein synthesis under certain stress conditions. May act as a fidelity factor of the translation reaction, by catalyzing a one-codon backward translocation of tRNAs on improperly translocated ribosomes. Back-translocation proceeds from a post-translocation (POST) complex to a pre-translocation (PRE) complex, thus giving elongation factor G a second chance to translocate the tRNAs correctly. Binds to ribosomes in a GTP-dependent manner. The chain is Elongation factor 4 from Synechococcus sp. (strain RCC307).